A 250-amino-acid polypeptide reads, in one-letter code: GTP cyclohydrolase 1 (250 aa).

2 stretches are compositionally biased toward basic and acidic residues: residues 1-14 and 35-44; these read MEKGPVRAPAEKPR and PAEKPPRPEA. A disordered region spans residues 1 to 64; sequence MEKGPVRAPA…GERPRSEEDN (64 aa). 2 positions are modified to phosphoserine: serine 60 and serine 81. The Zn(2+) site is built by cysteine 141, histidine 144, and cysteine 212.

This sequence belongs to the GTP cyclohydrolase I family. Toroid-shaped homodecamer, composed of a dimer of pentamers. The inactive isoforms also form decamers and may possibly be incorporated into GCH1 heterodecamers, decreasing enzyme stability and activity. Interacts with AHSA1 and GCHFR/GFRP. Post-translationally, phosphorylated by casein kinase II at Ser-81 in HAECs during oscillatory shear stress; phosphorylation at Ser-81 results in increased enzyme activity. As to expression, in epidermis, expressed predominantly in basal undifferentiated keratinocytes and in some but not all melanocytes (at protein level).

The protein resides in the cytoplasm. It localises to the nucleus. The catalysed reaction is GTP + H2O = 7,8-dihydroneopterin 3'-triphosphate + formate + H(+). The protein operates within cofactor biosynthesis; 7,8-dihydroneopterin triphosphate biosynthesis; 7,8-dihydroneopterin triphosphate from GTP: step 1/1. Its activity is regulated as follows. GTP shows a positive allosteric effect, and tetrahydrobiopterin inhibits the enzyme activity. Zinc is required for catalytic activity. Inhibited by Mg(2+). Its function is as follows. Positively regulates nitric oxide synthesis in umbilical vein endothelial cells (HUVECs). May be involved in dopamine synthesis. May modify pain sensitivity and persistence. Isoform GCH-1 is the functional enzyme, the potential function of the enzymatically inactive isoforms remains unknown. The chain is GTP cyclohydrolase 1 (GCH1) from Homo sapiens (Human).